Consider the following 489-residue polypeptide: Rhamnulokinase (489 aa).

An ATP-binding site is contributed by 13-17 (ASSGR). Cysteines 68 and 222 form a disulfide. Substrate-binding positions include glycine 83 and 236-238 (HDT). Aspartate 237 serves as the catalytic Proton acceptor. Residue threonine 259 coordinates ATP. Asparagine 296 provides a ligand contact to substrate. Glutamine 304 contributes to the ATP binding site. Cysteine 353 and cysteine 370 form a disulfide bridge. Glycine 402 provides a ligand contact to ATP. The cysteines at positions 413 and 417 are disulfide-linked.

It belongs to the rhamnulokinase family. As to quaternary structure, monomer. Requires Mg(2+) as cofactor.

The catalysed reaction is L-rhamnulose + ATP = L-rhamnulose 1-phosphate + ADP + H(+). It participates in carbohydrate degradation; L-rhamnose degradation; glycerone phosphate from L-rhamnose: step 2/3. Involved in the catabolism of L-rhamnose (6-deoxy-L-mannose). Catalyzes the transfer of the gamma-phosphate group from ATP to the 1-hydroxyl group of L-rhamnulose to yield L-rhamnulose 1-phosphate. This chain is Rhamnulokinase, found in Escherichia coli O17:K52:H18 (strain UMN026 / ExPEC).